Consider the following 235-residue polypeptide: Transcription factor MYB59 (235 aa).

2 HTH myb-type domains span residues 5-57 (QEEY…VNYL) and 58-112 (HPGL…RKKA). A DNA-binding region (H-T-H motif) is located at residues 33–57 (WDFVAKVSGLNRTGKSCRLRWVNYL). Positions 62–65 (KRGK) match the Bipartite nuclear localization signal 1 motif. A DNA-binding region (H-T-H motif) is located at residues 85–108 (WSKIARKLPGRTDNEIKNYWRTHM). Positions 109–117 (RKKAQEKKR) match the Bipartite nuclear localization signal 2 motif. Positions 109–147 (RKKAQEKKRPMSPTSSSSNCCSSSMTTTTSQDTGGSNGK) are disordered. Low complexity predominate over residues 119-138 (MSPTSSSSNCCSSSMTTTTS).

As to expression, mainly expressed in leaves and seedlings, and to a lower extent, in roots, stems and inflorescences. Isoform MYB59-1 and isoform MYB59-2 are present in roots, leaves, and seedlings, while the expression of isoform MYB59-3 and isoform MYB59-4 is confined to seedlings.

Its subcellular location is the nucleus. Functionally, transcription factor. This chain is Transcription factor MYB59 (MYB59), found in Arabidopsis thaliana (Mouse-ear cress).